Reading from the N-terminus, the 275-residue chain is MGIRIYKSYTPGTRNRSSSDFVEITKSKPEKSLLRKKLSCAGRNNRGLITVRHKGGGHKQRYRLVDFKRNKLDIPAIVASVEYDPNRNARIALLHYQDGEKRYILHPKKLAVGDKIYSGINVPIEIGNAMPLYNVPLGTAVHNVELIPGRGGQIVRSAGTSAQVVAKDGQVVTIKMPSNEVRMIYKNCYATIGEVGNADIKNIRLGKAGRKRWLGIRPSVRGVVMNPCDHPHGGGEGRSPIGRAKPVTPWGKPALGVKTRRQNKYSDFCIIRSRN.

Residues 225-252 (MNPCDHPHGGGEGRSPIGRAKPVTPWGK) are disordered.

Belongs to the universal ribosomal protein uL2 family. As to quaternary structure, part of the 50S ribosomal subunit.

It is found in the plastid. It localises to the chloroplast. This is Large ribosomal subunit protein uL2c (rpl2) from Guillardia theta (Cryptophyte).